The sequence spans 341 residues: L-threonine 3-dehydrogenase (341 aa).

Cysteine 38 contacts Zn(2+). Active-site charge relay system residues include threonine 40 and histidine 43. Positions 63, 64, 93, 96, 99, and 107 each coordinate Zn(2+). NAD(+)-binding positions include isoleucine 175, aspartate 195, arginine 200, 262 to 264 (LGI), and 286 to 287 (IY).

The protein belongs to the zinc-containing alcohol dehydrogenase family. Homotetramer. It depends on Zn(2+) as a cofactor.

The protein localises to the cytoplasm. The enzyme catalyses L-threonine + NAD(+) = (2S)-2-amino-3-oxobutanoate + NADH + H(+). The protein operates within amino-acid degradation; L-threonine degradation via oxydo-reductase pathway; glycine from L-threonine: step 1/2. Catalyzes the NAD(+)-dependent oxidation of L-threonine to 2-amino-3-ketobutyrate. This chain is L-threonine 3-dehydrogenase, found in Chromobacterium violaceum (strain ATCC 12472 / DSM 30191 / JCM 1249 / CCUG 213 / NBRC 12614 / NCIMB 9131 / NCTC 9757 / MK).